The chain runs to 364 residues: Anthranilate phosphoribosyltransferase 1 (364 aa).

5-phospho-alpha-D-ribose 1-diphosphate contacts are provided by residues Gly-102, 105 to 106 (GD), Thr-110, 112 to 115 (NIST), 130 to 138 (KHGNRSASS), and Ser-142. Residue Gly-102 coordinates anthranilate. A Mg(2+)-binding site is contributed by Ser-114. Asn-133 contributes to the anthranilate binding site. Arg-188 contacts anthranilate. Mg(2+)-binding residues include Asp-247 and Glu-248.

It belongs to the anthranilate phosphoribosyltransferase family. Homodimer. Mg(2+) is required as a cofactor.

The catalysed reaction is N-(5-phospho-beta-D-ribosyl)anthranilate + diphosphate = 5-phospho-alpha-D-ribose 1-diphosphate + anthranilate. The protein operates within amino-acid biosynthesis; L-tryptophan biosynthesis; L-tryptophan from chorismate: step 2/5. In terms of biological role, catalyzes the transfer of the phosphoribosyl group of 5-phosphorylribose-1-pyrophosphate (PRPP) to anthranilate to yield N-(5'-phosphoribosyl)-anthranilate (PRA). The sequence is that of Anthranilate phosphoribosyltransferase 1 from Nostoc sp. (strain PCC 7120 / SAG 25.82 / UTEX 2576).